The primary structure comprises 269 residues: Basic leucine zipper 19 (269 aa).

One can recognise a bZIP domain in the interval 140–196; sequence DPKRVKRILANRQSAQRSRVRKLQYISELERSVTTLQMEVSALSPRVAFLDHQRSLL. A basic motif region spans residues 142-161; sequence KRVKRILANRQSAQRSRVRK. The tract at residues 168 to 196 is leucine-zipper; that stretch reads LERSVTTLQMEVSALSPRVAFLDHQRSLL.

In terms of tissue distribution, expressed in roots and shoots.

It localises to the nucleus. Its function is as follows. Transcription regulator. This Oryza sativa subsp. japonica (Rice) protein is Basic leucine zipper 19 (BZIP19).